A 445-amino-acid chain; its full sequence is Neuropeptide Y receptor type 5 (445 aa).

Residues 1–42 lie on the Extracellular side of the membrane; that stretch reads MDLELDEYYNKTLATENNTAATRNSDFPVWDDYKSSVDDLQY. N-linked (GlcNAc...) asparagine glycans are attached at residues Asn-10 and Asn-17. Residues 43–63 traverse the membrane as a helical segment; that stretch reads FLIGLYTFVSLLGFMGNLLIL. Over 64–77 the chain is Cytoplasmic; the sequence is MALMKKRNQKTTVN. A helical membrane pass occupies residues 78 to 98; it reads FLIGNLAFSDILVVLFCSPFT. The Extracellular segment spans residues 99–117; it reads LTSVLLDQWMFGKVMCHIM. Cysteines 114 and 198 form a disulfide. A helical membrane pass occupies residues 118–138; it reads PFLQCVSVLVSTLILISIAIV. Residues 139–156 lie on the Cytoplasmic side of the membrane; sequence RYHMIKHPISNNLTANHG. A helical membrane pass occupies residues 157 to 177; sequence YFLIATVWTLGFAICSPLPVF. Over 178-208 the chain is Extracellular; that stretch reads HSLVELQETFGSALLSSRYLCVESWPSDSYR. Residues 209-229 traverse the membrane as a helical segment; sequence IAFTISLLLVQYILPLVCLTV. Residues 230 to 369 lie on the Cytoplasmic side of the membrane; sequence SHTSVCRSIS…KKRSRSVFYR (140 aa). The chain crosses the membrane as a helical span at residues 370-390; it reads LTILILVFAVSWMPLHLFHVV. Over 391 to 407 the chain is Extracellular; it reads TDFNDNLISNRHFKLVY. The chain crosses the membrane as a helical span at residues 408-428; the sequence is CICHLLGMMSCCLNPILYGFL. The Cytoplasmic portion of the chain corresponds to 429-445; that stretch reads NNGIKADLVSLIHCLHM. Cys-442 carries the S-palmitoyl cysteine lipid modification.

The protein belongs to the G-protein coupled receptor 1 family. As to expression, brain; hypothalamus.

The protein resides in the cell membrane. In terms of biological role, receptor for neuropeptide Y and peptide YY. The activity of this receptor is mediated by G proteins that inhibit adenylate cyclase activity. Seems to be associated with food intake. Could be involved in feeding disorders. The polypeptide is Neuropeptide Y receptor type 5 (NPY5R) (Homo sapiens (Human)).